The primary structure comprises 100 residues: Small ribosomal subunit protein uS14c (100 aa).

The protein belongs to the universal ribosomal protein uS14 family. Part of the 30S ribosomal subunit.

The protein resides in the plastid. The protein localises to the chloroplast. Binds 16S rRNA, required for the assembly of 30S particles. The polypeptide is Small ribosomal subunit protein uS14c (Pyropia yezoensis (Susabi-nori)).